The primary structure comprises 1003 residues: cGMP-dependent protein kinase (1003 aa).

Residues 1-141 (MGACSSKAQH…KAIKQQEDTQ (141 aa)) form a disordered region. A lipid anchor (N-myristoyl glycine) is attached at Gly-2. Residue Cys-4 is the site of S-palmitoyl cysteine attachment. A compositionally biased stretch (low complexity) spans 69-85 (EQQQQQQQQQQQQQEQQ). 2 stretches are compositionally biased toward basic and acidic residues: residues 86–109 (QHPE…ERKP) and 127–141 (ERKV…EDTQ). 4 cNMP-binding domain regions span residues 173 to 289 (VCSS…FLAS), 292 to 391 (FFEM…RVLG), 411 to 548 (VFAS…ATLG), and 570 to 669 (IFRY…LQIV). 4 residues coordinate 3',5'-cyclic GMP: Gly-237, Glu-238, Arg-247, and Thr-248. 3',5'-cyclic GMP-binding residues include Arg-625, Gly-634, Glu-635, Ala-637, Arg-644, and Ser-645. A Protein kinase domain is found at 693 to 950 (LNVVRVVGRG…YKDIKEHAFF (258 aa)). ATP-binding positions include 699–707 (VGRGTFGTV) and Lys-722. The active-site Proton acceptor is Asp-816. Positions 951–1003 (SDFDWDRLAGRDLSPPLLPKGEIYAEDAEEGGLDIEEDEGIELEDEYEWDKDF) constitute an AGC-kinase C-terminal domain.

Belongs to the protein kinase superfamily. AGC Ser/Thr protein kinase family. cGMP subfamily. Monomer. Requires Mg(2+) as cofactor.

The protein localises to the cell membrane. Its subcellular location is the cytoplasm. It carries out the reaction L-seryl-[protein] + ATP = O-phospho-L-seryl-[protein] + ADP + H(+). The enzyme catalyses L-threonyl-[protein] + ATP = O-phospho-L-threonyl-[protein] + ADP + H(+). Its activity is regulated as follows. Activated by cGMP. The cGMP-binding domains acts cooperatively to activate PKG. Inhibited by the antiparasitic small molecule 4-[2-(4-fluorophenyl)-5-(1-methylpiperidine-4-yl)-1Hpyrrol- 3-yl]pyridine (compound 1). Serine/threonine protein kinase which acts as a downstream effector of the second messenger cGMP. In Eimeria tenella (Coccidian parasite), this protein is cGMP-dependent protein kinase.